The following is a 341-amino-acid chain: MNPQKIAVLGPGSWGTALSQVLNDNGHEVRIWGNNPEQMAEINEKHTNTRYFKDVVLDEKIKAFDRLDLALEDVDAILFVVPTKVTRLVAKQVAEVLKHKVHILHASKGLEQGTHERISTILEEEIPAQLRGEIVVVSGPSHAEETIVRDITLISAASKDHDEAKYAQAIFSNDYFRLYTNTDVIGVETAGALKNIIAVGAGALHGLGFGDNAKAAIITRGLAEITRLGVAMGAEPLTYSGLSGVGDLIVTGTSIHSRNWRAGDALGRGEKLADIEKNMGMVIEGVSTTKAAFELAQQLGIDMPITETIYKVLYENLDAKTGILDIMRRETRAENEFINNK.

NADPH is bound by residues Ser-13, Trp-14, and Lys-108. Positions 108, 139, and 141 each coordinate sn-glycerol 3-phosphate. Ala-143 lines the NADPH pocket. The sn-glycerol 3-phosphate site is built by Lys-194, Asp-247, Ser-257, Arg-258, and Asn-259. Catalysis depends on Lys-194, which acts as the Proton acceptor. Arg-258 contributes to the NADPH binding site. The NADPH site is built by Val-282 and Glu-284.

This sequence belongs to the NAD-dependent glycerol-3-phosphate dehydrogenase family.

It is found in the cytoplasm. The enzyme catalyses sn-glycerol 3-phosphate + NAD(+) = dihydroxyacetone phosphate + NADH + H(+). The catalysed reaction is sn-glycerol 3-phosphate + NADP(+) = dihydroxyacetone phosphate + NADPH + H(+). It functions in the pathway membrane lipid metabolism; glycerophospholipid metabolism. Catalyzes the reduction of the glycolytic intermediate dihydroxyacetone phosphate (DHAP) to sn-glycerol 3-phosphate (G3P), the key precursor for phospholipid synthesis. The polypeptide is Glycerol-3-phosphate dehydrogenase [NAD(P)+] (Lactococcus lactis subsp. lactis (strain IL1403) (Streptococcus lactis)).